The primary structure comprises 420 residues: Gamma-glutamyl phosphate reductase (420 aa).

Belongs to the gamma-glutamyl phosphate reductase family.

The protein localises to the cytoplasm. It catalyses the reaction L-glutamate 5-semialdehyde + phosphate + NADP(+) = L-glutamyl 5-phosphate + NADPH + H(+). The protein operates within amino-acid biosynthesis; L-proline biosynthesis; L-glutamate 5-semialdehyde from L-glutamate: step 2/2. In terms of biological role, catalyzes the NADPH-dependent reduction of L-glutamate 5-phosphate into L-glutamate 5-semialdehyde and phosphate. The product spontaneously undergoes cyclization to form 1-pyrroline-5-carboxylate. This is Gamma-glutamyl phosphate reductase from Streptococcus pneumoniae (strain P1031).